Reading from the N-terminus, the 191-residue chain is dTTP/UTP pyrophosphatase (191 aa).

Asp71 serves as the catalytic Proton acceptor.

This sequence belongs to the Maf family. YhdE subfamily. It depends on a divalent metal cation as a cofactor.

Its subcellular location is the cytoplasm. The catalysed reaction is dTTP + H2O = dTMP + diphosphate + H(+). It carries out the reaction UTP + H2O = UMP + diphosphate + H(+). Its function is as follows. Nucleoside triphosphate pyrophosphatase that hydrolyzes dTTP and UTP. May have a dual role in cell division arrest and in preventing the incorporation of modified nucleotides into cellular nucleic acids. The sequence is that of dTTP/UTP pyrophosphatase from Geobacter sulfurreducens (strain ATCC 51573 / DSM 12127 / PCA).